Consider the following 252-residue polypeptide: Coenzyme F420:L-glutamate ligase (252 aa).

Residues valine 12–glutamate 15, histidine 44–threonine 45, and lysine 49 contribute to the GTP site. Aspartate 114 is a binding site for a divalent metal cation. Asparagine 117 serves as a coordination point for GTP. 3 residues coordinate a divalent metal cation: aspartate 155, threonine 156, and glutamine 213. Methionine 211 to threonine 218 contacts GTP.

Belongs to the CofE family. Homodimer. The cofactor is Mg(2+). Requires Mn(2+) as cofactor. K(+) is required as a cofactor.

The enzyme catalyses oxidized coenzyme F420-0 + GTP + L-glutamate = oxidized coenzyme F420-1 + GDP + phosphate + H(+). The catalysed reaction is oxidized coenzyme F420-1 + GTP + L-glutamate = oxidized coenzyme F420-2 + GDP + phosphate + H(+). It participates in cofactor biosynthesis; coenzyme F420 biosynthesis. Functionally, catalyzes the GTP-dependent successive addition of two or more gamma-linked L-glutamates to the L-lactyl phosphodiester of 7,8-didemethyl-8-hydroxy-5-deazariboflavin (F420-0) to form coenzyme F420-0-glutamyl-glutamate (F420-2) or polyglutamated F420 derivatives. This is Coenzyme F420:L-glutamate ligase from Methanopyrus kandleri (strain AV19 / DSM 6324 / JCM 9639 / NBRC 100938).